The sequence spans 151 residues: Coiled-coil-helix-coiled-coil-helix domain-containing protein 2 (151 aa).

Disordered stretches follow at residues 1 to 50 (MPRG…AAAP) and 77 to 111 (GHAI…AQQQ). The span at 10-26 (SRMAPPASRAPQMRAAP) shows a compositional bias: low complexity. The segment covering 27–38 (RPAPVAQPPAAA) has biased composition (pro residues). 2 stretches are compositionally biased toward low complexity: residues 39-50 (PPSAVGSSAAAP) and 100-111 (QEPQGTQPAQQQ). One can recognise a CHCH domain in the interval 111–151 (QQPCLYEIKQFLECAQNQGDIKLCEGFNEVLKQCRLANGLA). 2 consecutive short sequence motifs (cx9C motif) follow at residues 114 to 124 (CLYEIKQFLEC) and 134 to 144 (CEGFNEVLKQC). Intrachain disulfides connect C114–C144 and C124–C134.

In terms of assembly, interacts with RBPJ.

It is found in the nucleus. Its subcellular location is the mitochondrion. The protein resides in the mitochondrion intermembrane space. Transcription factor. Binds to the oxygen responsive element of COX4I2 and activates its transcription under hypoxia conditions (4% oxygen), as well as normoxia conditions (20% oxygen). The chain is Coiled-coil-helix-coiled-coil-helix domain-containing protein 2 (CHCHD2) from Homo sapiens (Human).